A 320-amino-acid chain; its full sequence is Taste receptor type 2 member 129 (320 aa).

Residues 1 to 8 (MDGIVQNM) are Extracellular-facing. The chain crosses the membrane as a helical span at residues 9 to 29 (FTFIVIVEIIIGWIGNGFIAL). Topologically, residues 30 to 55 (VNCIHWYKRRKISALNQILTALAFSR) are cytoplasmic. Residues 56–76 (IYLLLTVFTVIAVSTLYTHVL) form a helical membrane-spanning segment. Over 77–88 (VTRRVVKLINFH) the chain is Extracellular. A helical membrane pass occupies residues 89–109 (LLFSNHFSMWLAACLGLYYFL). Residues 110 to 128 (KIAHFPNSIFVYLKMRINQ) lie on the Cytoplasmic side of the membrane. The helical transmembrane segment at 129–149 (VVSGTLLMSLGLLFLNTLLIN) threads the bilayer. Topologically, residues 150-185 (SYIDTKIDDYREHLLYDFTSNNTASFYRVILVINNC) are extracellular. Asn-170 is a glycosylation site (N-linked (GlcNAc...) asparagine). A helical membrane pass occupies residues 186–206 (IFTSIPFTLSQSTFLLLIFSL). At 207-233 (WRHYKKMQQHAQRCRDVLADAHIRVLQ) the chain is on the cytoplasmic side. Residues 234–254 (TMVTYVLLCAIFFLSLSMQIL) form a helical membrane-spanning segment. Residues 255–264 (RSELLKNILY) are Extracellular-facing. The chain crosses the membrane as a helical span at residues 265–285 (VRFCEIVAAVFPSGHSCVLIC). Over 286 to 320 (RDTNLRGTFLSVLSWLKQRFTSWIPNINCRSSCIF) the chain is Cytoplasmic.

The protein belongs to the G-protein coupled receptor T2R family.

It localises to the membrane. Putative taste receptor which may play a role in the perception of bitterness. This chain is Taste receptor type 2 member 129, found in Mus musculus (Mouse).